Consider the following 206-residue polypeptide: MKLADAIATAPRRTLKGTYWHQGPTRHPVTSCADPARGPGRYHRTGEPGVWYASNKEQGAWAELFRHFVDDGVDPFEVRRRVGRVAVTLQVLDLTDERTRSHLGVDETDLLSDDYTTTQAIAAARDANFDAVLAPAAALPGCQTLAVFVHALPNIEPERSEVRQPPPRLANLLPLIRPHEHMPDSVRRLLATLTRAGAEAIRRRRR.

This sequence belongs to the MbcT/ParT/Res family. As to quaternary structure, forms a heterotetramer with cognate antitoxin Rv3188.

It catalyses the reaction phosphate + NAD(+) = ADP-alpha-D-ribose 1''-phosphate + nicotinamide + H(+). In terms of biological role, probable toxic component of a type II toxin-antitoxin (TA) system. Degrades NAD(+) by phosphorolysis. Neutralized by its cognate antitoxin Rv3188. The sequence is that of Probable NAD(+) phosphorylase Rv3189 from Mycobacterium tuberculosis (strain ATCC 25618 / H37Rv).